Consider the following 350-residue polypeptide: Dihydroorotase (350 aa).

Residues H13 and H15 each coordinate Zn(2+). Residues 15–17 (HLR) and N41 each bind substrate. K99, H136, and H174 together coordinate Zn(2+). At K99 the chain carries N6-carboxylysine. H136 serves as a coordination point for substrate. Residue L219 participates in substrate binding. D247 is a Zn(2+) binding site. Residue D247 is part of the active site. The substrate site is built by H251 and A263.

It belongs to the metallo-dependent hydrolases superfamily. DHOase family. Class II DHOase subfamily. As to quaternary structure, homodimer. Requires Zn(2+) as cofactor.

The enzyme catalyses (S)-dihydroorotate + H2O = N-carbamoyl-L-aspartate + H(+). Its pathway is pyrimidine metabolism; UMP biosynthesis via de novo pathway; (S)-dihydroorotate from bicarbonate: step 3/3. In terms of biological role, catalyzes the reversible cyclization of carbamoyl aspartate to dihydroorotate. This chain is Dihydroorotase, found in Allorhizobium ampelinum (strain ATCC BAA-846 / DSM 112012 / S4) (Agrobacterium vitis (strain S4)).